A 406-amino-acid chain; its full sequence is Probable endo-xylogalacturonan hydrolase A (406 aa).

The N-terminal stretch at 1–18 (MISLNSIFLLSLVGLSRA) is a signal peptide. Positions 20-49 (PSRSETSPDRTIKPRAACTPTAGGSSSTDD) are disordered. 6 PbH1 repeats span residues 183 to 213 (TSNA…DIGA), 214 to 235 (STYV…AFKP), 237 to 257 (ANYV…SVGS), 266 to 289 (VQNV…KTYP), 299 to 320 (VKNA…QIQS), and 368 to 390 (TCDV…ILCG). The active-site Proton donor is Asp-228. The N-linked (GlcNAc...) asparagine glycan is linked to Asn-244. His-251 is an active-site residue. Residues Asn-273, Asn-278, and Asn-301 are each glycosylated (N-linked (GlcNAc...) asparagine).

This sequence belongs to the glycosyl hydrolase 28 family.

Its subcellular location is the secreted. In terms of biological role, pectinolytic enzyme involved in the degradation of xylogalacturonan (xga), a galacturonan backbone heavily substituted with xylose, and which is one important component of the hairy regions of pectin. Activity requires a galacturonic acid backbone substituted with xylose. The polypeptide is Probable endo-xylogalacturonan hydrolase A (xghA) (Aspergillus oryzae (strain ATCC 42149 / RIB 40) (Yellow koji mold)).